Here is a 340-residue protein sequence, read N- to C-terminus: Organic solute transporter subunit alpha (340 aa).

Topologically, residues 1–48 (MEPGRTQIKLDPRYTADLLEVLKTNYGIPSACFSQPPTAAQLLRALGP) are extracellular. The helical transmembrane segment at 49-69 (VELALTSILTLLALGSIAIFL) threads the bilayer. Residues 70–87 (EDAVYLYKNTLCPIKRRT) are Cytoplasmic-facing. The helical transmembrane segment at 88–108 (LLWKSSAPTVVSVLCCFGLWI) threads the bilayer. Over 109 to 118 (PRSLVLVEMT) the chain is Extracellular. The chain crosses the membrane as a helical span at residues 119–139 (ITSFYAVCFYLLMLVMVEGFG). The Cytoplasmic portion of the chain corresponds to 140–181 (GKEAVLRTLRDTPMMVHTGPCCCCCPCCPRLLLTRKKLQLLM). A helical membrane pass occupies residues 182 to 202 (LGPFQYAFLKITLTLVGLFLV). Over 203-218 (PDGIYDPADISEGSTA) the chain is Extracellular. A helical membrane pass occupies residues 219 to 239 (LWINTFLGVSTLLALWTLGII). Residues 240–255 (SRQARLHLGEQNMGAK) lie on the Cytoplasmic side of the membrane. The helical transmembrane segment at 256-276 (FALFQVLLILTALQPSIFSVL) threads the bilayer. Residues 277-294 (ANGGQIACSPPYSSKTRS) lie on the Extracellular side of the membrane. A helical membrane pass occupies residues 295-317 (QVMNCHLLILETFLMTVLTRMYY). Residues 318–340 (RRKDHKVGYETFSSPDLDLNLKA) lie on the Cytoplasmic side of the membrane. Ser330 is subject to Phosphoserine.

Belongs to the OST-alpha family. As to quaternary structure, interacts with SLC51B. The Ost-alpha/Ost-beta complex is a heterodimer composed of alpha (SLC51A) and beta (SLC51B) subunit. Widely expressed with a high expression in ileum. Expressed in testis, colon, liver, small intestine, kidney, ovary and adrenal gland; and at low levels in heart, lung, brain, pituitary, thyroid gland, uterus, prostate, mammary gland and fat.

It is found in the cell membrane. Its subcellular location is the endoplasmic reticulum membrane. The catalysed reaction is taurocholate(out) = taurocholate(in). It carries out the reaction estrone 3-sulfate(out) = estrone 3-sulfate(in). The enzyme catalyses dehydroepiandrosterone 3-sulfate(out) = dehydroepiandrosterone 3-sulfate(in). It catalyses the reaction tauroursodeoxycholate(out) = tauroursodeoxycholate(in). The catalysed reaction is glycoursodeoxycholate(out) = glycoursodeoxycholate(in). It carries out the reaction glycocholate(out) = glycocholate(in). The enzyme catalyses taurochenodeoxycholate(out) = taurochenodeoxycholate(in). It catalyses the reaction glycochenodeoxycholate(out) = glycochenodeoxycholate(in). The catalysed reaction is taurodeoxycholate(out) = taurodeoxycholate(in). It carries out the reaction glycodeoxycholate(out) = glycodeoxycholate(in). The enzyme catalyses prostaglandin E2(out) = prostaglandin E2(in). Functionally, essential component of the Ost-alpha/Ost-beta complex, a heterodimer that acts as the intestinal basolateral transporter responsible for bile acid export from enterocytes into portal blood. Efficiently transports the major species of bile acids (taurocholate). Taurine conjugates are transported more efficiently across the basolateral membrane than glycine-conjugated bile acids. Can also transport steroids such as estrone 3-sulfate and dehydroepiandrosterone 3-sulfate, therefore playing a role in the enterohepatic circulation of sterols. Able to transport eicosanoids such as prostaglandin E2. This chain is Organic solute transporter subunit alpha (SLC51A), found in Homo sapiens (Human).